The chain runs to 486 residues: Glutamyl-tRNA(Gln) amidotransferase subunit A (486 aa).

Catalysis depends on charge relay system residues Lys76 and Ser151. The active-site Acyl-ester intermediate is the Ser175.

Belongs to the amidase family. GatA subfamily. Heterotrimer of A, B and C subunits.

It carries out the reaction L-glutamyl-tRNA(Gln) + L-glutamine + ATP + H2O = L-glutaminyl-tRNA(Gln) + L-glutamate + ADP + phosphate + H(+). Allows the formation of correctly charged Gln-tRNA(Gln) through the transamidation of misacylated Glu-tRNA(Gln) in organisms which lack glutaminyl-tRNA synthetase. The reaction takes place in the presence of glutamine and ATP through an activated gamma-phospho-Glu-tRNA(Gln). The sequence is that of Glutamyl-tRNA(Gln) amidotransferase subunit A from Nitrosomonas europaea (strain ATCC 19718 / CIP 103999 / KCTC 2705 / NBRC 14298).